Consider the following 62-residue polypeptide: MAQLKVTQTRSTIGGKQNQRETLATLGLGRIGKSTVQEDTPGVRGMIRVVAHLVSVEEVDES.

It belongs to the universal ribosomal protein uL30 family. As to quaternary structure, part of the 50S ribosomal subunit.

The chain is Large ribosomal subunit protein uL30 from Beutenbergia cavernae (strain ATCC BAA-8 / DSM 12333 / CCUG 43141 / JCM 11478 / NBRC 16432 / NCIMB 13614 / HKI 0122).